Here is a 94-residue protein sequence, read N- to C-terminus: Acylphosphatase (94 aa).

In terms of domain architecture, Acylphosphatase-like spans Ala7 to Arg94. Catalysis depends on residues Arg22 and Asn40.

Belongs to the acylphosphatase family.

The catalysed reaction is an acyl phosphate + H2O = a carboxylate + phosphate + H(+). In Sinorhizobium medicae (strain WSM419) (Ensifer medicae), this protein is Acylphosphatase (acyP).